We begin with the raw amino-acid sequence, 206 residues long: Platelet glycoprotein Ib beta chain (206 aa).

Positions 1–26 are cleaved as a signal peptide; the sequence is MGSRPRGALSLLLLLLALLSRPASGC. 2 cysteine pairs are disulfide-bonded: cysteine 26–cysteine 32 and cysteine 30–cysteine 39. In terms of domain architecture, LRRNT spans 27–55; it reads PAPCSCAGTLVDCGRRGLTWASLPAAFPP. The Extracellular portion of the chain corresponds to 27–147; sequence PAPCSCAGTL…RAACAPGLLC (121 aa). An LRR repeat occupies 60-83; that stretch reads LVLTGNNLTALPPGLLDALPALRA. Asparagine 66 is a glycosylation site (N-linked (GlcNAc...) asparagine). The LRRCT domain occupies 89 to 143; the sequence is NPWRCDCRLLPLRAWLAGRPERAPYRDLRCVAPPALRGRLLPYVAEDELRAACAP. Intrachain disulfides connect cysteine 93/cysteine 118 and cysteine 95/cysteine 141. Residues 148–172 traverse the membrane as a helical segment; that stretch reads WGALVAQLALLVLGLLHALLLALLL. Residues 173–206 are Cytoplasmic-facing; sequence GRLRRLRARARARSIQEFSLTAPLVAESARGGAS. Serine 186 and serine 191 each carry phosphoserine. Threonine 193 is subject to Phosphothreonine. At serine 200 the chain carries Phosphoserine.

Two GP-Ib beta are disulfide-linked to one GP-Ib alpha. GP-IX is complexed with the GP-Ib heterodimer via a non covalent linkage. Interacts with TRAF4.

It localises to the membrane. Its function is as follows. Gp-Ib, a surface membrane protein of platelets, participates in the formation of platelet plugs by binding to von Willebrand factor, which is already bound to the subendothelium. The polypeptide is Platelet glycoprotein Ib beta chain (Gp1bb) (Mus musculus (Mouse)).